The following is a 934-amino-acid chain: UPF0182 protein sync_1321 (934 aa).

9 helical membrane-spanning segments follow: residues 2–22 (AKIIWTIGRFGLLLIPLIVII), 45–65 (LLLQLGGALFAFLFVGSCALW), 86–106 (GYRYGFCLLACLLVLLSVLAI), 129–149 (FSTGWPLLSLSILMLTLIMFG), 165–185 (VCICLIVARSWGLWSLAFSIP), 208–228 (IAFGLELVLLQLSLTLSTALW), 251–271 (HGLRPGFALVLMSFSGLMWLS), 300–320 (LGSIALLVLAFVVLPSPFSSV), and 327–347 (LILAFIAIASFGLEMVLFPLM).

It belongs to the UPF0182 family.

Its subcellular location is the cell membrane. In Synechococcus sp. (strain CC9311), this protein is UPF0182 protein sync_1321.